The sequence spans 138 residues: Large ribosomal subunit protein uL16 (138 aa).

A compositionally biased stretch (basic residues) spans 1-13 (MLQPSRRKFRKEQ). The interval 1–20 (MLQPSRRKFRKEQKGRNTGV) is disordered.

This sequence belongs to the universal ribosomal protein uL16 family. Part of the 50S ribosomal subunit.

Functionally, binds 23S rRNA and is also seen to make contacts with the A and possibly P site tRNAs. The chain is Large ribosomal subunit protein uL16 from Leptothrix cholodnii (strain ATCC 51168 / LMG 8142 / SP-6) (Leptothrix discophora (strain SP-6)).